We begin with the raw amino-acid sequence, 404 residues long: Keratin, type I cuticular Ha3-I (404 aa).

Positions 1-56 are head; it reads MSYSCGLPNLSCRTSCSSRPCVPPSCHGCTLPGACNIPANVSNCNWFCEGSFNGSE. The IF rod domain occupies 56–367; it reads EKETMQFLND…SLLESEDCKL (312 aa). The tract at residues 57 to 91 is coil 1A; the sequence is KETMQFLNDRLASYLEKVRQLERDNAELENLIRER. The interval 92–102 is linker 1; it reads SQQQEPLVCAS. Residues 103-203 form a coil 1B region; the sequence is YQSYFKTIEE…HEQEVNTLRC (101 aa). The segment at 204–219 is linker 12; it reads QLGGRLNVEVDAAPAV. Positions 220-363 are coil 2; sequence DLNQVLNETR…NTYRSLLESE (144 aa). The tract at residues 364 to 404 is tail; sequence DCKLPSNPCAITNACDKSTGPCISNPCGPRARCGPCNTFGY.

Belongs to the intermediate filament family.

The sequence is that of Keratin, type I cuticular Ha3-I from Pan troglodytes (Chimpanzee).